We begin with the raw amino-acid sequence, 157 residues long: SsrA-binding protein (157 aa).

This sequence belongs to the SmpB family.

The protein localises to the cytoplasm. In terms of biological role, required for rescue of stalled ribosomes mediated by trans-translation. Binds to transfer-messenger RNA (tmRNA), required for stable association of tmRNA with ribosomes. tmRNA and SmpB together mimic tRNA shape, replacing the anticodon stem-loop with SmpB. tmRNA is encoded by the ssrA gene; the 2 termini fold to resemble tRNA(Ala) and it encodes a 'tag peptide', a short internal open reading frame. During trans-translation Ala-aminoacylated tmRNA acts like a tRNA, entering the A-site of stalled ribosomes, displacing the stalled mRNA. The ribosome then switches to translate the ORF on the tmRNA; the nascent peptide is terminated with the 'tag peptide' encoded by the tmRNA and targeted for degradation. The ribosome is freed to recommence translation, which seems to be the essential function of trans-translation. In Aquifex aeolicus (strain VF5), this protein is SsrA-binding protein.